The primary structure comprises 157 residues: Endoribonuclease YbeY (157 aa).

The Zn(2+) site is built by His114, His118, and His124.

The protein belongs to the endoribonuclease YbeY family. Requires Zn(2+) as cofactor.

It is found in the cytoplasm. In terms of biological role, single strand-specific metallo-endoribonuclease involved in late-stage 70S ribosome quality control and in maturation of the 3' terminus of the 16S rRNA. This Serratia proteamaculans (strain 568) protein is Endoribonuclease YbeY.